A 418-amino-acid polypeptide reads, in one-letter code: tRNA(Met) cytidine acetate ligase (418 aa).

Residues Gly-95, Asn-161, and Arg-186 each contribute to the ATP site.

The protein belongs to the TmcAL family.

The protein localises to the cytoplasm. It carries out the reaction cytidine(34) in elongator tRNA(Met) + acetate + ATP = N(4)-acetylcytidine(34) in elongator tRNA(Met) + AMP + diphosphate. Catalyzes the formation of N(4)-acetylcytidine (ac(4)C) at the wobble position of elongator tRNA(Met), using acetate and ATP as substrates. First activates an acetate ion to form acetyladenylate (Ac-AMP) and then transfers the acetyl group to tRNA to form ac(4)C34. The sequence is that of tRNA(Met) cytidine acetate ligase from Thermotoga maritima (strain ATCC 43589 / DSM 3109 / JCM 10099 / NBRC 100826 / MSB8).